The sequence spans 581 residues: Proline--tRNA ligase (581 aa).

The protein belongs to the class-II aminoacyl-tRNA synthetase family. ProS type 1 subfamily. As to quaternary structure, homodimer.

The protein localises to the cytoplasm. The catalysed reaction is tRNA(Pro) + L-proline + ATP = L-prolyl-tRNA(Pro) + AMP + diphosphate. Functionally, catalyzes the attachment of proline to tRNA(Pro) in a two-step reaction: proline is first activated by ATP to form Pro-AMP and then transferred to the acceptor end of tRNA(Pro). As ProRS can inadvertently accommodate and process non-cognate amino acids such as alanine and cysteine, to avoid such errors it has two additional distinct editing activities against alanine. One activity is designated as 'pretransfer' editing and involves the tRNA(Pro)-independent hydrolysis of activated Ala-AMP. The other activity is designated 'posttransfer' editing and involves deacylation of mischarged Ala-tRNA(Pro). The misacylated Cys-tRNA(Pro) is not edited by ProRS. In Paracidovorax citrulli (strain AAC00-1) (Acidovorax citrulli), this protein is Proline--tRNA ligase.